We begin with the raw amino-acid sequence, 1181 residues long: 1-phosphatidylinositol 4,5-bisphosphate phosphodiesterase beta-2 (1181 aa).

Residues 312 to 463 (QDMTQPLNHY…LRGKILIKNK (152 aa)) enclose the PI-PLC X-box domain. Residue histidine 327 is part of the active site. Ca(2+)-binding residues include asparagine 328, glutamate 357, and aspartate 359. Residue histidine 374 is part of the active site. Glutamate 408 serves as a coordination point for Ca(2+). Residues 465–534 (NQFSGPASPS…EEIKKMQSDE (70 aa)) are disordered. The span at 503-525 (TEVEEEEVVEEEEEEESGNLDEE) shows a compositional bias: acidic residues. A PI-PLC Y-box domain is found at 547–663 (MSSLVNYIQP…GYLLKHEFMR (117 aa)). The 126-residue stretch at 666–791 (DKQFNPFSVD…CLRSESNMAL (126 aa)) folds into the C2 domain. Residues 847 to 890 (SGTPVASQSNGAPVSAGNGSTAPGTKATGEEATKEVTEPQTASL) form a disordered region. The span at 850–869 (PVASQSNGAPVSAGNGSTAP) shows a compositional bias: polar residues. Over residues 874–883 (TGEEATKEVT) the composition is skewed to basic and acidic residues. The stretch at 893–940 (LRELKGVVKLQRRHEKELRELERRGARRWEELLQRGAAQLAELQTQAA) forms a coiled coil. Phosphoserine is present on serine 950. Coiled coils occupy residues 974 to 1026 (PRVQ…AELK) and 1075 to 1141 (HIQE…VRAY). Residues 1149–1181 (EAEDKPERSCEASEESCPQEPLVSKADTQESRL) form a disordered region. Residues 1150-1159 (AEDKPERSCE) are compositionally biased toward basic and acidic residues.

As to quaternary structure, interacts with RAC1. Forms a complex composed of at least WDR26, a G-beta:gamma unit, and PLCB2. Ca(2+) serves as cofactor.

The enzyme catalyses a 1,2-diacyl-sn-glycero-3-phospho-(1D-myo-inositol-4,5-bisphosphate) + H2O = 1D-myo-inositol 1,4,5-trisphosphate + a 1,2-diacyl-sn-glycerol + H(+). It catalyses the reaction a 1,2-diacyl-sn-glycero-3-phospho-(1D-myo-inositol) + H2O = 1D-myo-inositol 1-phosphate + a 1,2-diacyl-sn-glycerol + H(+). The production of the second messenger molecules diacylglycerol (DAG) and inositol 1,4,5-trisphosphate (IP3) is mediated by activated phosphatidylinositol-specific phospholipase C enzymes. In neutrophils, participates in a phospholipase C-activating N-formyl peptide-activated GPCR (G protein-coupled receptor) signaling pathway by promoting RASGRP4 activation by DAG, to promote neutrophil functional responses. This is 1-phosphatidylinositol 4,5-bisphosphate phosphodiesterase beta-2 from Mus musculus (Mouse).